The chain runs to 694 residues: Heat shock protein homolog SSE1 (694 aa).

Residues 671–694 form a disordered region; it reads AQRSADSEAKKDATPEGDAQMDLD. Basic and acidic residues predominate over residues 675–684; it reads ADSEAKKDAT.

It belongs to the heat shock protein 70 family.

Its subcellular location is the cytoplasm. The chain is Heat shock protein homolog SSE1 (SSE1) from Candida glabrata (strain ATCC 2001 / BCRC 20586 / JCM 3761 / NBRC 0622 / NRRL Y-65 / CBS 138) (Yeast).